Reading from the N-terminus, the 217-residue chain is 3,4-dihydroxy-2-butanone 4-phosphate synthase (217 aa).

D-ribulose 5-phosphate contacts are provided by residues 37 to 38, aspartate 42, 150 to 154, and glutamate 174; these read RE and RRGHT. Glutamate 38 contacts Mg(2+). Histidine 153 contacts Mg(2+).

Belongs to the DHBP synthase family. As to quaternary structure, homodimer. It depends on Mg(2+) as a cofactor. Mn(2+) serves as cofactor.

It catalyses the reaction D-ribulose 5-phosphate = (2S)-2-hydroxy-3-oxobutyl phosphate + formate + H(+). Its pathway is cofactor biosynthesis; riboflavin biosynthesis; 2-hydroxy-3-oxobutyl phosphate from D-ribulose 5-phosphate: step 1/1. Catalyzes the conversion of D-ribulose 5-phosphate to formate and 3,4-dihydroxy-2-butanone 4-phosphate. The protein is 3,4-dihydroxy-2-butanone 4-phosphate synthase of Aeromonas salmonicida (strain A449).